A 528-amino-acid polypeptide reads, in one-letter code: MNDDPNALARIWIDVVADLTSDSPGGDLPPLTRGQKAWLALVKPLTLAQGFALLSVPSPFAQEAIERDLREPILHALGRHLGEQVEGLGVRIAAPVDDEPESDPPSRDHRPEPEPLHTPRHLEPSVTSSGSFRRRRFGSGEDQPYSDTTDFEEVDDDREALASVHESWPSYFTKPPSGPAPSATGGNSLNAKYTFDTFVIGSSNRFAHAAAVAIAEAPARAYNPLFVWGASGLGKTHLLHAAGHYAQRLFPGMRVKYVSTEEFTNDFINSLRDDRKVAFKRRYRETDVLLVDDIQFIEGKEGIQEEFFHTFNTLHNANKQIVVSSDRPPKQLATLEERLRTRFEWGLITDVQPPELETRIAILSKKARMDRLEVPDDVLELIASRIERNIRELEGALIRVTAFASLNRQPLDLTLAEVVLRDLMPDSSSLEINAATIMAVTAEYFNMSIDDLCGPGKARPLASARQISMYLCRELTDLSLPKIGQTFGRDHTTVMYADKKIRKEMTERRKVYDQVQELTARIKQRSKR.

The domain I, interacts with DnaA modulators stretch occupies residues 1–104 (MNDDPNALAR…PVDDEPESDP (104 aa)). The interval 95 to 158 (PVDDEPESDP…TDFEEVDDDR (64 aa)) is disordered. Over residues 104 to 123 (PPSRDHRPEPEPLHTPRHLE) the composition is skewed to basic and acidic residues. The interval 105 to 187 (PSRDHRPEPE…GPAPSATGGN (83 aa)) is domain II. Residues 149–158 (TDFEEVDDDR) show a composition bias toward acidic residues. The segment at 188 to 404 (SLNAKYTFDT…GALIRVTAFA (217 aa)) is domain III, AAA+ region. Residues Gly-232, Gly-234, Lys-235, and Thr-236 each coordinate ATP. The tract at residues 405-528 (SLNRQPLDLT…TARIKQRSKR (124 aa)) is domain IV, binds dsDNA.

This sequence belongs to the DnaA family. Oligomerizes as a right-handed, spiral filament on DNA at oriC.

It is found in the cytoplasm. Its function is as follows. Plays an essential role in the initiation and regulation of chromosomal replication. ATP-DnaA binds to the origin of replication (oriC) to initiate formation of the DNA replication initiation complex once per cell cycle. Binds the DnaA box (a 9 base pair repeat at the origin) and separates the double-stranded (ds)DNA. Forms a right-handed helical filament on oriC DNA; dsDNA binds to the exterior of the filament while single-stranded (ss)DNA is stabiized in the filament's interior. The ATP-DnaA-oriC complex binds and stabilizes one strand of the AT-rich DNA unwinding element (DUE), permitting loading of DNA polymerase. After initiation quickly degrades to an ADP-DnaA complex that is not apt for DNA replication. Binds acidic phospholipids. This is Chromosomal replication initiator protein DnaA from Rhodococcus jostii (strain RHA1).